Reading from the N-terminus, the 605-residue chain is Elongation factor 4 (605 aa).

Residues 11–193 form the tr-type G domain; sequence KCIRNFSIIA…QIVTRISPPQ (183 aa). GTP-binding positions include 23–28 and 140–143; these read DHGKST and NKVD.

It belongs to the TRAFAC class translation factor GTPase superfamily. Classic translation factor GTPase family. LepA subfamily.

Its subcellular location is the cell membrane. The catalysed reaction is GTP + H2O = GDP + phosphate + H(+). In terms of biological role, required for accurate and efficient protein synthesis under certain stress conditions. May act as a fidelity factor of the translation reaction, by catalyzing a one-codon backward translocation of tRNAs on improperly translocated ribosomes. Back-translocation proceeds from a post-translocation (POST) complex to a pre-translocation (PRE) complex, thus giving elongation factor G a second chance to translocate the tRNAs correctly. Binds to ribosomes in a GTP-dependent manner. In Aster yellows witches'-broom phytoplasma (strain AYWB), this protein is Elongation factor 4.